The sequence spans 220 residues: MTSHRSESKATIKVRPPPSFIGGVQDKSWTPTPENWLYGAWYMTHTSQQYYWERTKNFVIQYEPVMNGVWPCTNQELVSLTPLNQPERIYTAFGIDSPIAGLDDAWLCQCTGHLSHISDHVAFLAWGADLQNVDWVVLYSTPLPGATVGLPAQVAIMSRERFGPDNTMVEAIKEALCAAGNSELTKLVDNLRPLLQEDLGSGRPTCEYHVVQNVDSLTRF.

Its pathway is polyketide biosynthesis. Functionally, part of the gene cluster B that mediates the biosynthesis of botcinic acid and its botcinin derivatives, acetate-derived polyketides that contribute to virulence when combined with the sesquiterpene botrydial. Botcinic acid and its derivatives have been shown to induce chlorosis and necrosis during host plant infection, but also have antifungal activities. Two polyketide synthases, BOA6 and BOA9, are involved in the biosynthesis of botcinins. BOA6 mediates the formation of the per-methylated tetraketide core by condensation of four units of malonyl-CoA with one unit of acetyl-CoA, which would be methylated in activated methylene groups to yield a bicyclic acid intermediate that could then either be converted to botrylactone derivatives or lose the starter acetate unit through a retro-Claisen type C-C bond cleavage to yield botcinin derivatives. The second polyketide synthase, BOA9, is probably required for the biosynthesis of the tetraketide side chain of botcinins. The methyltransferase (MT) domain within BOA6 is probably responsible for the incorporation of four methyl groups. The trans-enoyl reductase BOA5 might take over the enoyl reductase function of BOA6 that misses an ER domain. The monooxygenases BOA2, BOA3 and BOA4 might be involved in further hydroxylations at C4, C5 and C8, whereas BOA7, close to BOA9, could potentially be involved in the hydroxylation at C4 in the side chain of botcinins. This is Botcinic acid biosynthesis cluster B protein 12 from Botryotinia fuckeliana (strain B05.10) (Noble rot fungus).